Here is a 151-residue protein sequence, read N- to C-terminus: Probable cGMP 3',5'-cyclic phosphodiesterase subunit delta (151 aa).

This sequence belongs to the PDE6D/unc-119 family. Interacts with Pde6.

It localises to the nucleus. The protein localises to the cytoplasm. In Drosophila simulans (Fruit fly), this protein is Probable cGMP 3',5'-cyclic phosphodiesterase subunit delta.